The sequence spans 108 residues: Protein SMALL AUXIN UP-REGULATED RNA 51 (108 aa).

This sequence belongs to the ARG7 family. In terms of tissue distribution, expressed in organ primordia. Hardly observed in leaves.

It is found in the cell membrane. Functionally, provide a mechanistic link between auxin and plasma membrane H(+)-ATPases (PM H(+)-ATPases, e.g. AHA1 and AHA2), and triggers PM H(+)-ATPases activity by promoting phosphorylation of their C-terminal autoinhibitory domain as a result of PP2C-D subfamily of type 2C phosphatases inhibition, thus leading to the acidification of the apoplast and the facilitation of solutes and water uptake to drive cell expansion. Triggers plant growth probably by promoting cell elongation. Regulates branch angles and bending. The chain is Protein SMALL AUXIN UP-REGULATED RNA 51 from Arabidopsis thaliana (Mouse-ear cress).